The primary structure comprises 104 residues: Probable guanidinium efflux system subunit GdnD (104 aa).

4 helical membrane passes run 3–23 (WICL…MNQF), 31–51 (WIFL…LAME), 58–78 (AYAV…ILFY), and 84–104 (GKRI…KLIS).

It belongs to the drug/metabolite transporter (DMT) superfamily. Small multidrug resistance (SMR) (TC 2.A.7.1) family. YkkC/YkkD subfamily. In terms of assembly, the efflux pump is composed of GdnC and GdnD.

It localises to the cell membrane. In terms of biological role, probably involved in guanidinium transport. The polypeptide is Probable guanidinium efflux system subunit GdnD (Bacillus licheniformis (strain ATCC 14580 / DSM 13 / JCM 2505 / CCUG 7422 / NBRC 12200 / NCIMB 9375 / NCTC 10341 / NRRL NRS-1264 / Gibson 46)).